We begin with the raw amino-acid sequence, 697 residues long: Elongation factor G (697 aa).

Residues 10-285 (EKTRNIGIVA…GVNDYLPSPL (276 aa)) enclose the tr-type G domain. GTP contacts are provided by residues 19–26 (AHIDAGKT), 83–87 (DTPGH), and 137–140 (NKMD).

The protein belongs to the TRAFAC class translation factor GTPase superfamily. Classic translation factor GTPase family. EF-G/EF-2 subfamily.

It is found in the cytoplasm. In terms of biological role, catalyzes the GTP-dependent ribosomal translocation step during translation elongation. During this step, the ribosome changes from the pre-translocational (PRE) to the post-translocational (POST) state as the newly formed A-site-bound peptidyl-tRNA and P-site-bound deacylated tRNA move to the P and E sites, respectively. Catalyzes the coordinated movement of the two tRNA molecules, the mRNA and conformational changes in the ribosome. This is Elongation factor G from Ligilactobacillus salivarius (strain UCC118) (Lactobacillus salivarius).